A 202-amino-acid polypeptide reads, in one-letter code: MSKPPPKPAKPGQVKVFRALYTFEPRTPDELYFEEGDIIYISDMSDTNWWKGTCKGRTGLIPSNYVAEQAESIDNPLHEAAKRGNLSWLRECLDNQVGVNGLDKAGNTALYWACHGGHKDIVDVLFTQANLELNQQNKLGDTALHAAAWKGYADIVEMLLAKGARTDLKNNEKKLALDMATNAACASLLKKKQTAGTARTFK.

The region spanning 12–71 is the SH3 domain; it reads GQVKVFRALYTFEPRTPDELYFEEGDIIYISDMSDTNWWKGTCKGRTGLIPSNYVAEQAE. ANK repeat units follow at residues 72–101, 105–135, and 139–168; these read SIDNPLHEAAKRGNLSWLRECLDNQVGVNG, AGNTALYWACHGGHKDIVDVLFTQANLELNQ, and LGDTALHAAAWKGYADIVEMLLAKGARTDL.

The protein localises to the cytoplasm. In terms of biological role, induces bone resorption, acting probably through a signaling cascade which results in the secretion of factor(s) enhancing osteoclast formation and activity. The polypeptide is Osteoclast-stimulating factor 1 (OSTF1) (Gallus gallus (Chicken)).